The sequence spans 398 residues: MASNDKGLEEIPDSQIESNYDEITDSFDSMELKPELLRGVYAYGFERPSAIQQRAILPIVKGNDVIAQAQSGTGKTATFSISALQKLDPNVKACQALIVAPTRELAQQIQKVVIAIGDFMNIQCHACIGGTAVRDDMNALREGPQIVVGTPGRIHDMIQRRVLKTDQMKMFILDEADEMLSRGFTEQIYDIFQLLPQSTQVVLLSATMPQDVLEVTTKFMRDPVRILVKKQELTLEGIKQFYIAVEKEEWKLDTLSDLYETVTITQAVIFCNTRRKVDWLTDKLTARDFTVSAMHGDMEQAQRDVIMKEFRSGSSRVLIATDLLARGIDVQQVSLVINYDLPANRENYIHRIGRGGRFGRKGVAINFVTADDVRMMREIEQFYSTQIEEMPMNVADLI.

A Q motif motif is present at residues 25 to 53; it reads DSFDSMELKPELLRGVYAYGFERPSAIQQ. The 171-residue stretch at 56-226 folds into the Helicase ATP-binding domain; it reads ILPIVKGNDV…TKFMRDPVRI (171 aa). 69 to 76 serves as a coordination point for ATP; the sequence is AQSGTGKT. The DEAD box signature appears at 174-177; sequence DEAD. The 162-residue stretch at 237–398 folds into the Helicase C-terminal domain; the sequence is GIKQFYIAVE…EMPMNVADLI (162 aa).

The protein belongs to the DEAD box helicase family. eIF4A subfamily. As to quaternary structure, component of the eIF4F complex, which composition varies with external and internal environmental conditions. It is composed of at least eIF4A, eIF4E and eIF4G.

The protein localises to the cytoplasm. It catalyses the reaction ATP + H2O = ADP + phosphate + H(+). In terms of biological role, ATP-dependent RNA helicase which is a subunit of the eIF4F complex involved in cap recognition and is required for mRNA binding to ribosome. In the current model of translation initiation, eIF4A unwinds RNA secondary structures in the 5'-UTR of mRNAs which is necessary to allow efficient binding of the small ribosomal subunit, and subsequent scanning for the initiator codon. This Emericella nidulans (strain FGSC A4 / ATCC 38163 / CBS 112.46 / NRRL 194 / M139) (Aspergillus nidulans) protein is ATP-dependent RNA helicase eIF4A (tif1).